Consider the following 187-residue polypeptide: Endoribonuclease YbeY (187 aa).

Residues H151, H155, and H161 each coordinate Zn(2+).

Belongs to the endoribonuclease YbeY family. Requires Zn(2+) as cofactor.

Its subcellular location is the cytoplasm. Its function is as follows. Single strand-specific metallo-endoribonuclease involved in late-stage 70S ribosome quality control and in maturation of the 3' terminus of the 16S rRNA. The protein is Endoribonuclease YbeY of Prochlorococcus marinus (strain MIT 9313).